Here is a 496-residue protein sequence, read N- to C-terminus: MSQPCKDSDAKLRAACDRCHELKIRCTRTGGTESRCDRCEKNDIDCVYRAHRRIGRPKSQKSRCGPNTTARQNDTTTRGRIQQEQQEQMDISPPENRDSINSDFDFSIFEASGAVEWHRSSDVINVSTHQVSSTHPPFISPDCSLSHESSMSQTGSGSPFSMLNIGTMPVCDLDLSTLHGYGPSTDLVRSINHRSGSENESMEGNAELQSTQSASGSPQEEDQMLEDRLLRHQAKLRCLYSTVDATRNLISTTNDTVSHGAPLDKVLEAIMELVEILQTNANHTSSSSSSNSTTVDGPSEIRNQSRSRQDIANFNDIAILHVSISYAYIVKILAPIILSLEKSSVPVGSTSSSTYNDTTAHPSSASLPSQTGGPTKPRTVSVSLGSFSLASKPALNAQILLGMISRMLDQLHDATQPILMQVRHHHVPTQPVALQEREHHDAAMTREQHVSTGHGPDRHTSPVLSSAQAAVDSIRNEEKELLAKLNKVGNSTSATW.

Positions 16–46 form a DNA-binding region, zn(2)-C6 fungal-type; the sequence is CDRCHELKIRCTRTGGTESRCDRCEKNDIDC. 5 disordered regions span residues 57-102, 189-224, 281-307, 348-379, and 444-470; these read PKSQ…SINS, RSIN…EDQM, ANHT…QSRS, GSTS…KPRT, and MTRE…AQAA. Composition is skewed to polar residues over residues 65-89 and 207-218; these read GPNT…QEQM and ELQSTQSASGSP. Over residues 281-294 the composition is skewed to low complexity; that stretch reads ANHTSSSSSSNSTT. The span at 355 to 379 shows a compositional bias: polar residues; the sequence is YNDTTAHPSSASLPSQTGGPTKPRT. Positions 444 to 460 are enriched in basic and acidic residues; sequence MTREQHVSTGHGPDRHT.

The protein resides in the nucleus. Its function is as follows. Transcription regulator that specifically up-regulates the gene cluster that mediates the biosynthesis of fusarielins F, G and H, decaketide compounds with 5 methylations and a decaline core that act as mycoestrogens as they stimulate growth of MCF-7 breast cancer cells. Probably binds the 5'-CGGNNNCCG-3' motif present in the promoter of all the cluster genes. The protein is Fusarielin biosynthesis cluster transcription factor FSL7 of Gibberella zeae (strain ATCC MYA-4620 / CBS 123657 / FGSC 9075 / NRRL 31084 / PH-1) (Wheat head blight fungus).